Here is a 246-residue protein sequence, read N- to C-terminus: Probable transcriptional regulatory protein ORF2U (246 aa).

It belongs to the TACO1 family.

Its subcellular location is the cytoplasm. The sequence is that of Probable transcriptional regulatory protein ORF2U from Hathewaya histolytica (Clostridium histolyticum).